A 201-amino-acid chain; its full sequence is uncharacterized protein (201 aa).

Belongs to the methyltransferase superfamily.

This is an uncharacterized protein from Bacillus subtilis (strain 168).